The primary structure comprises 143 residues: Transcription antitermination protein NusB (143 aa).

The protein belongs to the NusB family.

Involved in transcription antitermination. Required for transcription of ribosomal RNA (rRNA) genes. Binds specifically to the boxA antiterminator sequence of the ribosomal RNA (rrn) operons. The sequence is that of Transcription antitermination protein NusB from Clostridium botulinum (strain Kyoto / Type A2).